The following is a 272-amino-acid chain: Phosphate import ATP-binding protein PstB (272 aa).

Residues 26 to 267 form the ABC transporter domain; the sequence is LEIRNLDLSY…PRKRKTEDYI (242 aa). 58–65 contributes to the ATP binding site; that stretch reads GPSGCGKS.

The protein belongs to the ABC transporter superfamily. Phosphate importer (TC 3.A.1.7) family. The complex is composed of two ATP-binding proteins (PstB), two transmembrane proteins (PstC and PstA) and a solute-binding protein (PstS).

It localises to the cell inner membrane. It carries out the reaction phosphate(out) + ATP + H2O = ADP + 2 phosphate(in) + H(+). Its function is as follows. Part of the ABC transporter complex PstSACB involved in phosphate import. Responsible for energy coupling to the transport system. The chain is Phosphate import ATP-binding protein PstB from Shewanella denitrificans (strain OS217 / ATCC BAA-1090 / DSM 15013).